We begin with the raw amino-acid sequence, 529 residues long: MSIGLTEFVTNKLAAEHPQVIPISVFIAILCLCLVIGHLLEENRWVNESITAILVGAASGTVILLISKGKSSHILVFDEELFFIYLLPPIIFNAGFQVKKKKFFHNFLTIMSFGVIGVFISTVIISFGTWWLFPKLGFKGLSARDYLAIGTIFSSTDTVCTLQILHQDETPLLYSLVFGEGVVNDATSVVLFNAVQKIQFESLTGWTALQVFGNFLYLFSTSTLLGIGVGLITSFVLKTLYFGRHSTTRELAIMVLMAYLSYMLAELFSLSGILTVFFCGVLMSHYASYNVTESSRITSRHVFAMLSFIAETFIFLYVGTDALDFTKWKTSSLSFGGTLGVSGVITALVLLGRAAFVFPLSVLTNFMNRHTERNESITFKHQVIIWWAGLMRGAVSIALAFKQFTYSGVTLDPVNAAMVTNTTIVVLFTTLVFGFLTKPLVNYLLPQDASHNTGNRGKRTEPGSPKEDATLPLLSFDESASTNFNRAKDSISLLMEQPVYTIHRYWRKFDDTYMRPIFGGPRRENQPEC.

Over 1–19 (MSIGLTEFVTNKLAAEHPQ) the chain is Cytoplasmic. The chain crosses the membrane as a helical span at residues 20-40 (VIPISVFIAILCLCLVIGHLL). At 41–45 (EENRW) the chain is on the vacuolar side. A helical transmembrane segment spans residues 46–66 (VNESITAILVGAASGTVILLI). Residues 67–73 (SKGKSSH) are Cytoplasmic-facing. An intramembrane region (helical) is located at residues 74 to 94 (ILVFDEELFFIYLLPPIIFNA). The Cytoplasmic portion of the chain corresponds to 95–112 (GFQVKKKKFFHNFLTIMS). The chain crosses the membrane as a helical span at residues 113–133 (FGVIGVFISTVIISFGTWWLF). Over 134–171 (PKLGFKGLSARDYLAIGTIFSSTDTVCTLQILHQDETP) the chain is Vacuolar. The helical transmembrane segment at 172–192 (LLYSLVFGEGVVNDATSVVLF) threads the bilayer. Over 193–214 (NAVQKIQFESLTGWTALQVFGN) the chain is Cytoplasmic. A helical membrane pass occupies residues 215–235 (FLYLFSTSTLLGIGVGLITSF). Over 236–250 (VLKTLYFGRHSTTRE) the chain is Vacuolar. The chain crosses the membrane as a helical span at residues 251-267 (LAIMVLMAYLSYMLAEL). Over 268 to 273 (FSLSGI) the chain is Cytoplasmic. A helical membrane pass occupies residues 274-291 (LTVFFCGVLMSHYASYNV). Over 292–301 (TESSRITSRH) the chain is Vacuolar. Residues 302 to 322 (VFAMLSFIAETFIFLYVGTDA) form a helical membrane-spanning segment. At 323-342 (LDFTKWKTSSLSFGGTLGVS) the chain is on the cytoplasmic side. A helical transmembrane segment spans residues 343-363 (GVITALVLLGRAAFVFPLSVL). Residues 364-380 (TNFMNRHTERNESITFK) are Vacuolar-facing. N-linked (GlcNAc...) asparagine glycosylation is present at asparagine 374. Residues 381-401 (HQVIIWWAGLMRGAVSIALAF) traverse the membrane as a helical segment. Over 402–415 (KQFTYSGVTLDPVN) the chain is Cytoplasmic. The helical transmembrane segment at 416–436 (AAMVTNTTIVVLFTTLVFGFL) threads the bilayer. Residues 437–529 (TKPLVNYLLP…GPRRENQPEC (93 aa)) lie on the Vacuolar side of the membrane.

This sequence belongs to the monovalent cation:proton antiporter 1 (CPA1) transporter (TC 2.A.36) family. Expressed at very low levels in roots and shoots.

The protein resides in the vacuole membrane. It carries out the reaction Na(+)(in) + H(+)(out) = Na(+)(out) + H(+)(in). It catalyses the reaction K(+)(in) + H(+)(out) = K(+)(out) + H(+)(in). Functionally, may act in low affinity electroneutral exchange of protons for cations such as Na(+) or K(+) across membranes. May also exchange Li(+) and Cs(+) with a lower affinity. This is Sodium/hydrogen exchanger 4 (NHX4) from Arabidopsis thaliana (Mouse-ear cress).